A 113-amino-acid polypeptide reads, in one-letter code: Small ribosomal subunit protein bS6 (113 aa).

This sequence belongs to the bacterial ribosomal protein bS6 family.

Its function is as follows. Binds together with bS18 to 16S ribosomal RNA. In Ruthia magnifica subsp. Calyptogena magnifica, this protein is Small ribosomal subunit protein bS6.